Consider the following 440-residue polypeptide: uncharacterized protein (440 aa).

Transmembrane regions (helical) follow at residues 24-44 (VVIG…APAA), 47-67 (AGSG…CNAI), 93-113 (FWGY…CAAM), 117-137 (VGFY…VVAL), 155-175 (IVAV…GSGA), 183-203 (IGVD…FFAF), 229-249 (LALG…IAVL), 276-296 (VVQI…ILGV), 323-343 (PFRA…TADI), 346-366 (AIGF…ASAL), 379-399 (IPLV…LSSV), and 400-420 (AAGA…RIIT).

It belongs to the amino acid-polyamine-organocation (APC) superfamily.

It is found in the cell membrane. In terms of biological role, probable amino-acid or metabolite transport protein. This is an uncharacterized protein from Mycobacterium bovis (strain ATCC BAA-935 / AF2122/97).